Consider the following 427-residue polypeptide: Glutamate-1-semialdehyde 2,1-aminomutase (427 aa).

Lys265 is modified (N6-(pyridoxal phosphate)lysine).

This sequence belongs to the class-III pyridoxal-phosphate-dependent aminotransferase family. HemL subfamily. Homodimer. Pyridoxal 5'-phosphate serves as cofactor.

It localises to the cytoplasm. The catalysed reaction is (S)-4-amino-5-oxopentanoate = 5-aminolevulinate. It functions in the pathway porphyrin-containing compound metabolism; protoporphyrin-IX biosynthesis; 5-aminolevulinate from L-glutamyl-tRNA(Glu): step 2/2. This is Glutamate-1-semialdehyde 2,1-aminomutase from Pseudomonas putida (strain ATCC 700007 / DSM 6899 / JCM 31910 / BCRC 17059 / LMG 24140 / F1).